The following is a 382-amino-acid chain: MDRFMWTNGLLEMNETLVIQQRGVRLYDGEDKAKLDVGGVVLSTHRLLWRDQKNHECCICIPLSQVIFFEEQAAGIGKSAKIVIHLHPAPENKEPGPYQHSKYSYIKLSFKEHGQIEFYRRLTEEMTQKRWENTPVSQPIPTGTGPKAGRTRAVGIVGIERKLEEKRKETDKNISEAFEDLSKLMEKAKEMVELSRSIANKIKDKQGDITEDETIRFKSYLLSMGIANPVTRETHGSGTQYHIQLAKQLGDMLQAPLEERGGMMALTEVYCLVNRARGMELLSPEDLVNACKIFESLKLPLRLRVFDSGVMVVQLQSHSEEEMIASALDNVSDKGSLTAEEFAKLLGLSVLLAKERLLLAEKMGHLCRDDSVEGLRFYPNLF.

A GLUE N-terminal domain is found at 1-88 (MDRFMWTNGL…SAKIVIHLHP (88 aa)). Positions 105–138 (YIKLSFKEHGQIEFYRRLTEEMTQKRWENTPVSQ) constitute a GLUE C-terminal domain. The stretch at 160 to 193 (ERKLEEKRKETDKNISEAFEDLSKLMEKAKEMVE) forms a coiled coil.

This sequence belongs to the VPS36 family. Component of the endosomal sorting complex required for transport II (ESCRT-II), composed of SNF8, VPS25 and VPS36.

The protein resides in the cytoplasm. The protein localises to the endosome. In terms of biological role, component of the ESCRT-II complex (endosomal sorting complex required for transport II), which is required for multivesicular body (MVB) formation and sorting of endosomal cargo proteins into MVBs. The MVB pathway mediates delivery of transmembrane proteins into the lumen of the lysosome for degradation. The ESCRT-II complex is probably involved in the recruitment of the ESCRT-III complex. The polypeptide is Vacuolar protein-sorting-associated protein 36 (vps36) (Danio rerio (Zebrafish)).